A 332-amino-acid polypeptide reads, in one-letter code: Fructose-1,6-bisphosphatase class 1 (332 aa).

Residues glutamate 89, aspartate 110, leucine 112, and aspartate 113 each contribute to the Mg(2+) site. Substrate contacts are provided by residues 113–116 (DGSS), asparagine 206, tyrosine 239, 257–259 (YLY), and lysine 269. Glutamate 275 provides a ligand contact to Mg(2+).

This sequence belongs to the FBPase class 1 family. In terms of assembly, homotetramer. It depends on Mg(2+) as a cofactor.

The protein resides in the cytoplasm. The enzyme catalyses beta-D-fructose 1,6-bisphosphate + H2O = beta-D-fructose 6-phosphate + phosphate. Its pathway is carbohydrate biosynthesis; gluconeogenesis. The sequence is that of Fructose-1,6-bisphosphatase class 1 from Cronobacter sakazakii (strain ATCC BAA-894) (Enterobacter sakazakii).